The following is a 535-amino-acid chain: Dual specificity mitogen-activated protein kinase kinase 7 (535 aa).

Ala-2 carries the N-acetylalanine modification. Positions Ala-2–Leu-30 form a coiled coil. Positions Gln-37–Ser-73 are d domain. The tract at residues Leu-63 to Leu-93 is disordered. A compositionally biased stretch (low complexity) spans Ser-69–Gln-79. A Protein kinase domain is found at Leu-136–Ile-396. ATP contacts are provided by residues Met-142 to Val-150 and Lys-165. Asp-259 serves as the catalytic Proton acceptor. Ser-287 carries the post-translational modification Phosphoserine; by MAP3K. Phosphothreonine; by MAP3K is present on Thr-291. The DVD domain stretch occupies residues His-393 to Lys-416. Ser-427 is modified (phosphoserine).

This sequence belongs to the protein kinase superfamily. STE Ser/Thr protein kinase family. MAP kinase kinase subfamily. Interacts with RASSF7, the interaction promotes phosphorylation. Interacts with VRK2. Interacts (via its D domain) with its substrates MAPK8/JNK1, MAPK9/JNK2 and MAPK10/JNK3. Interacts (via its DVD domain) with MAP3Ks activators like MAP3K5/ASK1 and MAP3K1/MEKK1. Interacts with SH3RF1, MAPK8IP1/JIP1, MAPK8IP2/JIP2 and MAPK8IP3/JIP3 scaffold proteins. Found in a complex with SH3RF1, RAC1, MAP3K11/MLK3, MAPK8IP1/JIP1 and MAPK8/JNK1. Found in a complex with SH3RF1, RAC2, MAP3K7/TAK1, MAPK8IP1/JIP1, MAPK8/JNK1 and MAPK9/JNK2. Mg(2+) is required as a cofactor. In terms of processing, activated by phosphorylation on Ser-287 and Thr-291 by MAP kinase kinase kinases (MAP3Ks). In terms of tissue distribution, expressed at high levels in brain, lung, liver, skeletal muscle, kidney, and testis and at lower levels in the heart and spleen.

It is found in the nucleus. It localises to the cytoplasm. It carries out the reaction L-seryl-[protein] + ATP = O-phospho-L-seryl-[protein] + ADP + H(+). The enzyme catalyses L-threonyl-[protein] + ATP = O-phospho-L-threonyl-[protein] + ADP + H(+). The catalysed reaction is L-tyrosyl-[protein] + ATP = O-phospho-L-tyrosyl-[protein] + ADP + H(+). With respect to regulation, activated by phosphorylation by specific MAP kinase kinase kinases such as MAP3K1/MEKK1, MAP3K3/MEKK3, MAP3K11/MLK3 and MAP3K12/DLK. Isoforms 3 and 4 have lower basal activity but a higher level of inducible activation, than isoforms 2, 6, 7 and 8. In terms of biological role, dual specificity protein kinase which acts as an essential component of the MAP kinase signal transduction pathway. Essential component of the stress-activated protein kinase/c-Jun N-terminal kinase (SAP/JNK) signaling pathway. With MAP2K4/MKK4, is the one of the only known kinase to directly activate the stress-activated protein kinase/c-Jun N-terminal kinases MAPK8/JNK1, MAPK9/JNK2 and MAPK10/JNK3. MAP2K4/MKK4 and MAP2K7/MKK7 both activate the JNKs by phosphorylation, but they differ in their preference for the phosphorylation site in the Thr-Pro-Tyr motif. MAP2K4/MKK4 shows preference for phosphorylation of the Tyr residue and MAP2K7/MKK7 for the Thr residue. The monophosphorylation of JNKs on the Thr residue is sufficient to increase JNK activity indicating that MAP2K7/MKK7 is important to trigger JNK activity, while the additional phosphorylation of the Tyr residue by MAP2K4/MKK4 ensures optimal JNK activation. Has a specific role in JNK signal transduction pathway activated by pro-inflammatory cytokines. The MKK/JNK signaling pathway is also involved in mitochondrial death signaling pathway, including the release cytochrome c, leading to apoptosis. Part of a non-canonical MAPK signaling pathway, composed of the upstream MAP3K12 kinase and downstream MAP kinases MAPK1/ERK2 and MAPK3/ERK1, that enhances the AP-1-mediated transcription of APP in response to APOE. This is Dual specificity mitogen-activated protein kinase kinase 7 from Mus musculus (Mouse).